The following is a 459-amino-acid chain: Trigger factor (459 aa).

The PPIase FKBP-type domain maps to 166–245 (GDFANIDLTA…VNSVKAEELP (80 aa)).

Belongs to the FKBP-type PPIase family. Tig subfamily.

Its subcellular location is the cytoplasm. The enzyme catalyses [protein]-peptidylproline (omega=180) = [protein]-peptidylproline (omega=0). Functionally, involved in protein export. Acts as a chaperone by maintaining the newly synthesized protein in an open conformation. Functions as a peptidyl-prolyl cis-trans isomerase. The chain is Trigger factor from Bifidobacterium longum subsp. infantis (strain ATCC 15697 / DSM 20088 / JCM 1222 / NCTC 11817 / S12).